Here is a 687-residue protein sequence, read N- to C-terminus: A-kinase anchor protein 8 (687 aa).

Residues 1–195 are interaction with MCM2; the sequence is MEQGYGGYGA…FLRGRGQGRF (195 aa). Residues 1–210 form an interaction with DPY30 region; that stretch reads MEQGYGGYGA…SSTFIRSDPF (210 aa). Serine 72 bears the Phosphoserine mark. Disordered regions lie at residues 105 to 124 and 185 to 218; these read KEGG…DRDS and GFLR…ASEP. Arginine 109 carries the asymmetric dimethylarginine; alternate modification. Residue arginine 109 is modified to Omega-N-methylarginine; alternate. Over residues 109–118 the composition is skewed to gly residues; the sequence is RGGISSGGEG. An interaction with DDX5 region spans residues 109-201; sequence RGGISSGGEG…QGRFQDRSNS (93 aa). Phosphoserine is present on serine 199. Omega-N-methylarginine occurs at positions 232 and 276. A disordered region spans residues 277-379; the sequence is SQTRIRDWPR…KQRRRDRMRD (103 aa). Basic and acidic residues-rich tracts occupy residues 280–294 and 311–320; these read RIRD…ERFG and PDAKLARADS. The Bipartite nuclear localization signal signature appears at 286–303; it reads RRRGFERFGPDNMGRKRK. Lysine 314 is covalently cross-linked (Glycyl lysine isopeptide (Lys-Gly) (interchain with G-Cter in SUMO2)). 3 positions are modified to phosphoserine: serine 320, serine 325, and serine 336. The segment covering 321-331 has biased composition (acidic residues); the sequence is DGDLSENDDGA. Residues 335 to 357 are compositionally biased toward basic and acidic residues; the sequence is RSGDEEFRGEDDLCDSRKQRGEK. Residues 384 to 447 are involved in chromatin-binding; that stretch reads RIQFACSVCK…NKKIEKRRQE (64 aa). C2H2 AKAP95-type zinc fingers lie at residues 389–411 and 478–501; these read CSVC…SKFH and CLAC…SVDH. The tract at residues 522-565 is involved in condensin complex recruitment; it reads SVLNNKHIVKMLEKYLKGEDPFVNETADLETEGDENVGEEKEET. Threonine 552 is modified (phosphothreonine). Positions 568–585 are RII-binding; it reads EVAAEVLAEVITAAVKAV. Residues 572-589 are required for interaction with MYCBP; sequence EVLAEVITAAVKAVEGEG. Positions 624-659 are disordered; the sequence is QTCEAASETRSIEDKTRGEAAEARNEAAMPTADAGS. The segment covering 633 to 648 has biased composition (basic and acidic residues); that stretch reads RSIEDKTRGEAAEARN. Residue serine 659 is modified to Phosphoserine.

This sequence belongs to the AKAP95 family. In terms of assembly, binds to the PKA RII-alpha regulatory subunit PRKAR2A. Interacts (via C-terminus) with FIGN. Interacts with NCAPD2, CCND3, CCNE1, MCM2, RPS6KA1, DDX5, PDE4A. Interacts with MYCBP; MYCBP is translocated to the nucleus and the interaction prevents the association of the PKA catalytic subunit leading to suppression of PKA activity. Interacts with CCND1, CASP3. Interacts with NFKB1; detetcted in the cytoplasm. Interacts with DPY30; mediating AKAP8 association with at least the MLL4/WBP7 HMT complex. Interacts with HDAC3; increased during mitosis. Interacts with GJA1; in the nucleus and in the nuclear membrane; the nuclear association increases with progress of cell cycle G1, S and G2 phase and decreases in M phase. Post-translationally, phosphorylated on tyrosine residues probably by SRC subfamily protein kinases; multiple phosphorylation is leading to dissociation from nuclear structures implicated in chromatin structural changes.

The protein localises to the nucleus matrix. It is found in the nucleus. Its subcellular location is the nucleolus. It localises to the cytoplasm. Functionally, anchoring protein that mediates the subcellular compartmentation of cAMP-dependent protein kinase (PKA type II). Acts as an anchor for a PKA-signaling complex onto mitotic chromosomes, which is required for maintenance of chromosomes in a condensed form throughout mitosis. Recruits condensin complex subunit NCAPD2 to chromosomes required for chromatin condensation; the function appears to be independent from PKA-anchoring. Specifically involved in recruitment of CAPD2 to, and condensation of maternal but not paternal chromosomes. May help to deliver cyclin D/E to CDK4 to facilitate cell cycle progression. Required for cell cycle G2/M transition and histone deacetylation during mitosis. In mitotic cells recruits HDAC3 to the vicinity of chromatin leading to deacetylation and subsequent phosphorylation at 'Ser-10' of histone H3; in this function may act redundantly with AKAP8L. Involved in nuclear retention of RPS6KA1 upon ERK activation thus inducing cell proliferation. May be involved in regulation of DNA replication by acting as scaffold for MCM2. Enhances HMT activity of the KMT2 family MLL4/WBP7 complex and is involved in transcriptional regulation. In a teratocarcinoma cell line is involved in retinoic acid-mediated induction of developmental genes implicating H3 'Lys-4' methylation. May be involved in recruitment of active CASP3 to the nucleus in apoptotic cells. May act as a carrier protein of GJA1 for its transport to the nucleus. May play a repressive role in the regulation of rDNA transcription. Preferentially binds GC-rich DNA in vitro. In cells, associates with ribosomal RNA (rRNA) chromatin, preferentially with rRNA promoter and transcribed regions. Involved in modulation of Toll-like receptor signaling. Required for the cAMP-dependent suppression of TNF-alpha in early stages of LPS-induced macrophage activation; the function probably implicates targeting of PKA to NFKB1. This Mus musculus (Mouse) protein is A-kinase anchor protein 8 (Akap8).